The sequence spans 280 residues: F420-dependent methylenetetrahydromethanopterin dehydrogenase (280 aa).

Belongs to the MTD family.

It catalyses the reaction 5,10-methylenetetrahydromethanopterin + oxidized coenzyme F420-(gamma-L-Glu)(n) + 2 H(+) = 5,10-methenyl-5,6,7,8-tetrahydromethanopterin + reduced coenzyme F420-(gamma-L-Glu)(n). Its pathway is one-carbon metabolism; methanogenesis from CO(2); 5,10-methylene-5,6,7,8-tetrahydromethanopterin from 5,10-methenyl-5,6,7,8-tetrahydromethanopterin (coenzyme F420 route): step 1/1. Catalyzes the reversible reduction of methenyl-H(4)MPT(+) to methylene-H(4)MPT. This chain is F420-dependent methylenetetrahydromethanopterin dehydrogenase, found in Methanocorpusculum labreanum (strain ATCC 43576 / DSM 4855 / Z).